Consider the following 518-residue polypeptide: Integrator complex subunit 14 (518 aa).

The VWFA domain occupies 2–204 (PTVVVMDVSL…KNVQSMFGKL (203 aa)). Residues Ser10, Ser12, and Thr86 each contribute to the Mg(2+) site. An N6-acetyllysine modification is found at Lys418.

Belongs to the Integrator subunit 14 family. Component of the Integrator complex, composed of core subunits INTS1, INTS2, INTS3, INTS4, INTS5, INTS6, INTS7, INTS8, INTS9/RC74, INTS10, INTS11/CPSF3L, INTS12, INTS13, INTS14 and INTS15. The core complex associates with protein phosphatase 2A subunits PPP2CA and PPP2R1A, to form the Integrator-PP2A (INTAC) complex. INTS14 is part of the tail subcomplex, composed of INTS10, INTS13, INTS14 and INTS15.

It is found in the nucleus. Its function is as follows. Component of the integrator complex, a multiprotein complex that terminates RNA polymerase II (Pol II) transcription in the promoter-proximal region of genes. The integrator complex provides a quality checkpoint during transcription elongation by driving premature transcription termination of transcripts that are unfavorably configured for transcriptional elongation: the complex terminates transcription by (1) catalyzing dephosphorylation of the C-terminal domain (CTD) of Pol II subunit POLR2A/RPB1 and SUPT5H/SPT5, (2) degrading the exiting nascent RNA transcript via endonuclease activity and (3) promoting the release of Pol II from bound DNA. The integrator complex is also involved in terminating the synthesis of non-coding Pol II transcripts, such as enhancer RNAs (eRNAs), small nuclear RNAs (snRNAs), telomerase RNAs and long non-coding RNAs (lncRNAs). Within the integrator complex, INTS14 is part of the integrator tail module that acts as a platform for the recruitment of transcription factors at promoters. This chain is Integrator complex subunit 14, found in Bos taurus (Bovine).